We begin with the raw amino-acid sequence, 408 residues long: Imidazolonepropionase (408 aa).

The Fe(3+) site is built by His74 and His76. Residues His74 and His76 each coordinate Zn(2+). Residues Arg83, Tyr146, and His179 each contribute to the 4-imidazolone-5-propanoate site. Tyr146 provides a ligand contact to N-formimidoyl-L-glutamate. His244 serves as a coordination point for Fe(3+). His244 contacts Zn(2+). Gln247 contacts 4-imidazolone-5-propanoate. Fe(3+) is bound at residue Asp319. Asp319 is a Zn(2+) binding site. Residues Asn321 and Gly323 each coordinate N-formimidoyl-L-glutamate. Thr324 contributes to the 4-imidazolone-5-propanoate binding site.

This sequence belongs to the metallo-dependent hydrolases superfamily. HutI family. Requires Zn(2+) as cofactor. It depends on Fe(3+) as a cofactor.

It is found in the cytoplasm. The enzyme catalyses 4-imidazolone-5-propanoate + H2O = N-formimidoyl-L-glutamate. It participates in amino-acid degradation; L-histidine degradation into L-glutamate; N-formimidoyl-L-glutamate from L-histidine: step 3/3. Its function is as follows. Catalyzes the hydrolytic cleavage of the carbon-nitrogen bond in imidazolone-5-propanoate to yield N-formimidoyl-L-glutamate. It is the third step in the universal histidine degradation pathway. This chain is Imidazolonepropionase, found in Ralstonia nicotianae (strain ATCC BAA-1114 / GMI1000) (Ralstonia solanacearum).